We begin with the raw amino-acid sequence, 154 residues long: Protein-export protein SecB (154 aa).

It belongs to the SecB family. Homotetramer, a dimer of dimers. One homotetramer interacts with 1 SecA dimer.

The protein resides in the cytoplasm. Its function is as follows. One of the proteins required for the normal export of preproteins out of the cell cytoplasm. It is a molecular chaperone that binds to a subset of precursor proteins, maintaining them in a translocation-competent state. It also specifically binds to its receptor SecA. This is Protein-export protein SecB from Vibrio cholerae serotype O1 (strain ATCC 39541 / Classical Ogawa 395 / O395).